Here is a 679-residue protein sequence, read N- to C-terminus: F-box/LRR-repeat protein 5 (679 aa).

Positions methionine 1–cysteine 159 are hemerythrin-like. Fe(3+) contacts are provided by histidine 15, histidine 57, glutamate 58, glutamate 61, histidine 80, histidine 126, and glutamate 130. The 47-residue stretch at arginine 205–leucine 251 folds into the F-box domain. LRR repeat units follow at residues glutamate 316–tyrosine 342, serine 343–threonine 367, glutamine 368–glycine 395, cysteine 396–alanine 426, cysteine 565–glycine 595, cysteine 596–glycine 623, and cysteine 624–tyrosine 649. The [2Fe-2S] cluster site is built by cysteine 650, cysteine 664, cysteine 674, and cysteine 675.

Part of a SCF (SKP1-cullin-F-box) protein ligase complex. Requires [2Fe-2S] cluster as cofactor. In terms of processing, ubiquitinated upon iron and oxygen depletion, leading to its degradation by the proteasome. Ubiquitination is regulated by the hemerythrin-like region that acts as an oxygen and iron sensor.

Its subcellular location is the cytoplasm. The protein localises to the perinuclear region. It is found in the nucleus. The protein operates within protein modification; protein ubiquitination. Component of some SCF (SKP1-cullin-F-box) protein ligase complex that plays a central role in iron homeostasis by promoting the ubiquitination and subsequent degradation of ireb2/irp2. Upon high iron and oxygen level, it specifically recognizes and binds ireb2/irp2, promoting its ubiquitination and degradation by the proteasome. The polypeptide is F-box/LRR-repeat protein 5 (fbxl5) (Danio rerio (Zebrafish)).